A 146-amino-acid polypeptide reads, in one-letter code: Cystatin-C (146 aa).

Positions 1 to 26 (MAGPLRAPLLLLAILAVALAVSPAAG) are cleaved as a signal peptide. Ser-43 is subject to Phosphoserine; by FAM20C. The Secondary area of contact motif lies at 81 to 85 (QIVAG). Cystine bridges form between Cys-99–Cys-109 and Cys-123–Cys-143.

Belongs to the cystatin family. Homodimer. The Thr-25 variant is O-glycosylated with a core 1 or possibly core 8 glycan. The signal peptide of the O-glycosylated Thr-25 variant is cleaved between Ala-20 and Val-21. In terms of tissue distribution, expressed in submandibular and sublingual saliva but not in parotid saliva (at protein level). Expressed in various body fluids, such as the cerebrospinal fluid and plasma. Expressed in highest levels in the epididymis, vas deferens, brain, thymus, and ovary and the lowest in the submandibular gland.

It localises to the secreted. Its function is as follows. As an inhibitor of cysteine proteinases, this protein is thought to serve an important physiological role as a local regulator of this enzyme activity. This is Cystatin-C (CST3) from Homo sapiens (Human).